The primary structure comprises 229 residues: Acetylcholine-binding protein (229 aa).

A signal peptide spans 1–19 (MRRNIFCLACLWIVQACLS). Asparagine 85 carries N-linked (GlcNAc...) asparagine glycosylation. Residues 114-217 (PEVLTPQLAR…PEAYEDVEVS (104 aa)) enclose the Ig-like domain. Cysteine 142 and cysteine 155 form a disulfide bridge.

As to quaternary structure, homopentamer. N-glycosylated. In terms of tissue distribution, expressed by glial cells.

Its subcellular location is the synaptic cleft. Functionally, binds to acetylcholine. Modulates neuronal synaptic transmission. This is Acetylcholine-binding protein from Lymnaea stagnalis (Great pond snail).